We begin with the raw amino-acid sequence, 330 residues long: Aspartate--ammonia ligase (330 aa).

This sequence belongs to the class-II aminoacyl-tRNA synthetase family. AsnA subfamily.

The protein localises to the cytoplasm. The enzyme catalyses L-aspartate + NH4(+) + ATP = L-asparagine + AMP + diphosphate + H(+). It participates in amino-acid biosynthesis; L-asparagine biosynthesis; L-asparagine from L-aspartate (ammonia route): step 1/1. This is Aspartate--ammonia ligase from Salmonella schwarzengrund (strain CVM19633).